Consider the following 274-residue polypeptide: Large ribosomal subunit protein uL2cz/uL2cy (274 aa).

2 disordered regions span residues 1-20 (MAIHLYKTSTPSTRNGAVDS) and 223-274 (MNPV…RRSK).

It belongs to the universal ribosomal protein uL2 family. As to quaternary structure, part of the 50S ribosomal subunit.

The protein localises to the plastid. Its subcellular location is the chloroplast. The chain is Large ribosomal subunit protein uL2cz/uL2cy (rpl2-A) from Eucalyptus globulus subsp. globulus (Tasmanian blue gum).